An 86-amino-acid chain; its full sequence is Large ribosomal subunit protein uL24c (86 aa).

Belongs to the universal ribosomal protein uL24 family. As to quaternary structure, part of the 50S ribosomal subunit.

The protein resides in the plastid. It localises to the chloroplast. One of two assembly initiator proteins, it binds directly to the 5'-end of the 23S rRNA, where it nucleates assembly of the 50S subunit. This chain is Large ribosomal subunit protein uL24c (rpl24), found in Heterosigma akashiwo (strain NIES-293 / 8280G21-1).